The following is a 1610-amino-acid chain: MKKEGSSGSFRLQPNTGSLSRAVSWINFSSLSRQTKRLFRSDGELSVCGQQVEVDDENWIYRAQPRKAVSNLDEESRWTVHYTAPWHQQENVFLPTTRPPCVEDLHRQAKLNLKSVLRECDKLRHDGYRSSQYYSQGPTFAANASPFCDDYQDEDEETDQKCSLSSSEEERFISIRRPKTPASSDFSDLNTQTNWTKSLPLPTPEEKMRQQAQTVQADVVPINITASGTGQDDADGHSVYTPDHYSTLGRFNSCRSAGQRSETRDSSCQTEDVKVVPPSMRRIRAQKGQGIAAQMGHFSGSSGNMSVLSDSAGIVFPSRLDSDAGFHSLPRSGARANIQSLEPRLGALGPAGDMNGTFLYQRGHPQADENLGHLGGASGTGTLLRPKSQELRHFESENIMSPACVVSPHATYSTSIIPNATLSSSSEVIAIPTAQSAGQRESKSSGSSHARIKSRDHLISRHAVKGDPQSPGRHWNEGHATILSQDLDPHSPGEPALLSLCDSAVPLNAPANRENGSQAMPYNCRNNLAFPAHPQDVDGKSESSYSGGGGHSSSEPWEYKSSGNGRASPLKPHLATPGYSTPTSNMSSCSLDQTSNKEDAGSLYSEDHDGYCASVHTDSGHGSGNLCNSSDGFGNPRHSVINVFVGRAQKNQGDRSNYQDKSLSRNISLKKAKKPPLPPSRTDSLRRIPKKSSQCNGQVLNESLIATLQHSLQLSLPGKSGSSPSQSPCSDLEEPWLPRSRSQSTVSAGSSMTSATTPNVYSLCGATPSQSDTSSVKSEYTDPWGYYIDYTGMQEDPGNPAGGCSTSSGVPTGNGPVRHVQEGSRATMPQVPGGSVKPKIMSPEKSHRVISPSSGYSSQSNTPTALTPVPVFLKSVSPANGKGKPKPKVPERKSSLISSVSISSSSTSLSSSTSTEGSGTMKKLDPAVGSPPAPPPPPVPSPPFPCPADRSPFLPPPPPVTDCSQGSPLPHSPVFPPPPPEALIPFCSPPDWCLSPPRPALSPILPDSPVSLPLPPPLLPSSEPPPAPPLDPKFMKDTRPPFTNSGQPESSRGSLRPPSTKEETSRPPMPLITTEALQMVQLRPVRKNSGAEAAQLSERTAQEQRTPVAPQYHLKPSAFLKSRNSTNEMESESQPASVTSSLPTPAKSSSQGDHGSAAERGGPVSRSPGAPSAGEAEARPSPSTTPLPDSSPSRKPPPISKKPKLFLVVPPPQKDFAVEPAENVSEALRAVPSPTTGEEGSVHSREAKESSAAQAGSHATHPGTSVLEGGAAGSMSPSRVEANVPMVQPDVSPAPKQEEPAENSADTGGDGESCLSQQDGAAGVPETNAAGSSSEACDFLKEDGNDEVMTPSRPRTTEDLFAAIHRSKRKVLGRRDSDDDHSRNHSPSPPVTPTGAAPSLASPKQVGSIQRSIRKSSTSSDNFKALLLKKGSRSDTSARMSAAEMLKNTDPRFQRSRSEPSPDAPESPSSCSPSKNRRAQEEWAKNEGLMPRSLSFSGPRYGRSRTPPSAASSRYSMRNRIQSSPMTVISEGEGEAVEPVDSIARGALGAAEGCSLDGLAREEMDEGGLLCGEGPAASLQPQAPGPVDGTASAEGREPSPQCGGSLSEES.

S24 is modified (phosphoserine). The tract at residues 145-169 is disordered; it reads SPFCDDYQDEDEETDQKCSLSSSEE. Phosphoserine occurs at positions 198 and 328. Residues 433–448 show a composition bias toward polar residues; it reads TAQSAGQRESKSSGSS. Disordered regions lie at residues 433–477 and 531–602; these read TAQS…HWNE and PAHP…DAGS. S568 bears the Phosphoserine mark. A compositionally biased stretch (polar residues) spans 578–594; sequence GYSTPTSNMSSCSLDQT. S639 is subject to Phosphoserine. The segment covering 649 to 667 has biased composition (polar residues); sequence QKNQGDRSNYQDKSLSRNI. 5 disordered regions span residues 649–693, 715–778, 791–981, 997–1535, and 1566–1610; these read QKNQ…KKSS, SLPG…SVKS, TGMQ…PPPE, PRPA…GEGE, and EGGL…SEES. The segment covering 715–730 has biased composition (low complexity); it reads SLPGKSGSSPSQSPCS. Polar residues-rich tracts occupy residues 740–760, 767–778, and 851–865; these read SRSQSTVSAGSSMTSATTPNV, TPSQSDTSSVKS, and SPSSGYSSQSNTPTA. Residues 895–928 are compositionally biased toward low complexity; the sequence is SLISSVSISSSSTSLSSSTSTEGSGTMKKLDPAV. 2 stretches are compositionally biased toward pro residues: residues 929 to 946 and 970 to 981; these read GSPPAPPPPPVPSPPFPC and PHSPVFPPPPPE. The segment covering 1001–1011 has biased composition (low complexity); it reads LSPILPDSPVS. The segment covering 1012–1031 has biased composition (pro residues); that stretch reads LPLPPPLLPSSEPPPAPPLD. Positions 1041 to 1053 are enriched in polar residues; it reads PFTNSGQPESSRG. S1089 is modified (phosphoserine). A compositionally biased stretch (polar residues) spans 1122 to 1153; the sequence is SRNSTNEMESESQPASVTSSLPTPAKSSSQGD. Phosphoserine is present on S1167. A compositionally biased stretch (low complexity) spans 1180–1193; it reads PSPSTTPLPDSSPS. Residue S1233 is modified to Phosphoserine. 2 stretches are compositionally biased toward basic and acidic residues: residues 1240 to 1249 and 1373 to 1383; these read GSVHSREAKE and GRRDSDDDHSR. Phosphoserine is present on residues S1386 and S1388. T1392 is modified (phosphothreonine). Positions 1405–1422 are enriched in polar residues; the sequence is QVGSIQRSIRKSSTSSDN. The span at 1447 to 1460 shows a compositional bias: basic and acidic residues; it reads KNTDPRFQRSRSEP. Low complexity-rich tracts occupy residues 1461 to 1474 and 1504 to 1516; these read SPDAPESPSSCSPS and SRTPPSAASSRYS.

The protein belongs to the NHS family. As to expression, widely expressed. Expressed in adult and fetal brain, fetal eyes, adult lens, kidney, liver and intestine.

This is NHS-like protein 1 (NHSL1) from Homo sapiens (Human).